Here is a 388-residue protein sequence, read N- to C-terminus: MIKNPKVLILTAHYGNGHVQVAKTLEQTFRQKGIKDVIVCDLFGESHPVITDITKYLYLKSYTIGKELYRLFYYGVEKIYDKKIASWYANFGRKRLKLLLQAEKPDIVINTFPIIAVPELKKQTGISIPVYNVLTDFCVHKIWIHREVDRYFVATDHVKKVMVDIGVPAEQIVETGIPIRSSFELKINPDIIYNKYQLCKNKKILLIVAGAHGVLGSVKELCQSFMSVPDLQVVVVCGKNEALKQDLVGVQETNPDALKVFGYVENIDELFRVTSCMITKPGGITLSEAAALQVPVILYKPVPGQENENAMYFERKGAAVVIRDDSEVFAKTEALLKDDMKLLQMKEAMKSIYRPEPADHIVDTILAENHVEPNHIPIKSPALAQSFT.

It belongs to the glycosyltransferase 28 family. UgtP subfamily.

Its subcellular location is the cell membrane. The enzyme catalyses a 1,2-diacyl-3-O-(beta-D-glucopyranosyl)-sn-glycerol + UDP-alpha-D-glucose = a 1,2-diacyl-3-O-(beta-D-Glc-(1-&gt;6)-beta-D-Glc)-sn-glycerol + UDP + H(+). It carries out the reaction a 1,2-diacyl-3-O-(beta-D-Glc-(1-&gt;6)-beta-D-Glc)-sn-glycerol + UDP-alpha-D-glucose = a 1,2-diacyl-3-O-(beta-D-Glc-(1-&gt;6)-beta-D-Glc-(1-&gt;6)-beta-D-Glc)-sn-glycerol + UDP + H(+). The catalysed reaction is a 1,2-diacyl-sn-glycerol + UDP-alpha-D-glucose = a 1,2-diacyl-3-O-(beta-D-glucopyranosyl)-sn-glycerol + UDP + H(+). It functions in the pathway glycolipid metabolism; diglucosyl-diacylglycerol biosynthesis. In terms of biological role, processive glucosyltransferase involved in the biosynthesis of both the bilayer- and non-bilayer-forming membrane glucolipids. Is able to successively transfer up to three glucosyl residues to diacylglycerol (DAG), thereby catalyzing the formation of beta-monoglucosyl-DAG (3-O-(beta-D-glucopyranosyl)-1,2-diacyl-sn-glycerol), beta-diglucosyl-DAG (3-O-(beta-D-glucopyranosyl-beta-(1-&gt;6)-D-glucopyranosyl)-1,2-diacyl-sn-glycerol) and beta-triglucosyl-DAG (3-O-(beta-D-glucopyranosyl-beta-(1-&gt;6)-D-glucopyranosyl-beta-(1-&gt;6)-D-glucopyranosyl)-1,2-diacyl-sn-glycerol). Beta-diglucosyl-DAG is the predominant glycolipid found in Bacillales and is also used as a membrane anchor for lipoteichoic acid (LTA). This Bacillus cereus (strain ZK / E33L) protein is Processive diacylglycerol beta-glucosyltransferase.